The following is a 300-amino-acid chain: Histone deacetylase HDT3 (300 aa).

Acidic residues predominate over residues 98 to 112 (EDEMDLDSEDEDEEL). Residues 98–300 (EDEMDLDSED…AHSKAKHGGK (203 aa)) are disordered. Over residues 119 to 132 (ENGKADEKKQKSQE) the composition is skewed to basic and acidic residues. The segment covering 151 to 197 (DDDSDEDETDDSDEDETDDSDEGLSPEEGDDDSSDEDDTSDDEEEDT) has biased composition (acidic residues). Basic and acidic residues predominate over residues 198–211 (PTPKKPEVGKKRAA). Over residues 265-275 (SPKSAPKSGVP) the composition is skewed to low complexity. The C2H2-type zinc finger occupies 274 to 297 (VPCKSCSKSFISETAPQAHSKAKH). Over residues 279–290 (CSKSFISETAPQ) the composition is skewed to polar residues.

The protein belongs to the histone deacetylase HD2 family. As to quaternary structure, multimer. Possibly forms a homotrimer with HDT1 and/or HDT2.

Its subcellular location is the nucleus. It is found in the nucleolus. Functionally, mediates the deacetylation of lysine residues on the N-terminal part of the core histones (H2A, H2B, H3 and H4). Histone deacetylation gives a tag for epigenetic repression and plays an important role in transcriptional regulation, cell cycle progression and developmental events. This chain is Histone deacetylase HDT3 (HDT3), found in Zea mays (Maize).